The primary structure comprises 364 residues: Glutamine synthetase (364 aa).

Residues 15 to 94 (VLAEYIWIDA…VLAECWNNDG (80 aa)) enclose the GS beta-grasp domain. Residues 101-364 (HRHECAKLMS…ETKRGEEEGF (264 aa)) form the GS catalytic domain.

This sequence belongs to the glutamine synthetase family. In terms of assembly, homooctamer.

The protein resides in the cytoplasm. It carries out the reaction L-glutamate + NH4(+) + ATP = L-glutamine + ADP + phosphate + H(+). The sequence is that of Glutamine synthetase (GLN1) from Yarrowia lipolytica (strain CLIB 122 / E 150) (Yeast).